Here is a 639-residue protein sequence, read N- to C-terminus: Polyphenol oxidase, chloroplastic (639 aa).

The transit peptide at 1-101 (MATLSSPTII…EGANYYNTLA (101 aa)) directs the protein to the chloroplast. Positions 35–58 (GVRSVNGKVSCQTKNNNGNDENNQ) are disordered. Cystine bridges form between Cys-111-Cys-127 and Cys-126-Cys-194. Cu cation is bound by residues His-193, His-214, His-223, His-354, His-358, and His-388. The segment at residues 197–214 (CDGSYPVLGHNDTRLEVH) is a cross-link (2'-(S-cysteinyl)-histidine (Cys-His)).

The protein belongs to the tyrosinase family. The cofactor is Cu(2+).

The protein resides in the plastid. Its subcellular location is the chloroplast thylakoid lumen. It carries out the reaction 2 catechol + O2 = 2 1,2-benzoquinone + 2 H2O. Functionally, catalyzes the oxidation of mono- and o-diphenols to o-diquinones. The sequence is that of Polyphenol oxidase, chloroplastic from Spinacia oleracea (Spinach).